Consider the following 78-residue polypeptide: Acyl carrier protein (78 aa).

A Carrier domain is found at 2–77 (STIEERVKKI…AAIDYINGHQ (76 aa)). At S37 the chain carries O-(pantetheine 4'-phosphoryl)serine.

This sequence belongs to the acyl carrier protein (ACP) family. 4'-phosphopantetheine is transferred from CoA to a specific serine of apo-ACP by AcpS. This modification is essential for activity because fatty acids are bound in thioester linkage to the sulfhydryl of the prosthetic group.

The protein localises to the cytoplasm. Its pathway is lipid metabolism; fatty acid biosynthesis. In terms of biological role, carrier of the growing fatty acid chain in fatty acid biosynthesis. The polypeptide is Acyl carrier protein (Erwinia tasmaniensis (strain DSM 17950 / CFBP 7177 / CIP 109463 / NCPPB 4357 / Et1/99)).